The sequence spans 307 residues: Acyl transferase (307 aa).

Catalysis depends on charge relay system residues serine 116, aspartate 213, and histidine 243.

The protein belongs to the LuxD family.

It participates in lipid metabolism; fatty acid reduction for biolumincescence. Its function is as follows. Acyl transferase is part of the fatty acid reductase system required for aldehyde biosynthesis; it produces fatty acids for the luminescent reaction. The polypeptide is Acyl transferase (Aliivibrio fischeri (Vibrio fischeri)).